The following is a 986-amino-acid chain: DNA polymerase I (986 aa).

Positions 1-303 (MFMSAKSPLL…RTFIDKIQAF (303 aa)) constitute a 5'-3' exonuclease domain. In terms of domain architecture, 3'-5' exonuclease spans 304–592 (HRNFSDNQSP…MEDRGIRIDC (289 aa)). The disordered stretch occupies residues 308–327 (SDNQSPVPMGNEADNGEPKK). A polymerase region spans residues 593–986 (DYLQTLSQQL…HRGSNWMEAK (394 aa)).

It belongs to the DNA polymerase type-A family. In terms of assembly, single-chain monomer with multiple functions.

The catalysed reaction is DNA(n) + a 2'-deoxyribonucleoside 5'-triphosphate = DNA(n+1) + diphosphate. In addition to polymerase activity, this DNA polymerase exhibits 3'-5' and 5'-3' exonuclease activity. This is DNA polymerase I (polA) from Synechocystis sp. (strain ATCC 27184 / PCC 6803 / Kazusa).